A 164-amino-acid polypeptide reads, in one-letter code: Phosphopantetheine adenylyltransferase (164 aa).

Thr-9 lines the substrate pocket. ATP is bound by residues 9 to 10 (TF) and His-17. The substrate site is built by Lys-41, Leu-73, and Arg-87. ATP-binding positions include 88-90 (GLR), Glu-98, and 123-129 (YMFISAT).

The protein belongs to the bacterial CoaD family. As to quaternary structure, homohexamer. Mg(2+) serves as cofactor.

The protein resides in the cytoplasm. It carries out the reaction (R)-4'-phosphopantetheine + ATP + H(+) = 3'-dephospho-CoA + diphosphate. The protein operates within cofactor biosynthesis; coenzyme A biosynthesis; CoA from (R)-pantothenate: step 4/5. In terms of biological role, reversibly transfers an adenylyl group from ATP to 4'-phosphopantetheine, yielding dephospho-CoA (dPCoA) and pyrophosphate. This is Phosphopantetheine adenylyltransferase from Nitrosomonas eutropha (strain DSM 101675 / C91 / Nm57).